A 484-amino-acid chain; its full sequence is Neuronal acetylcholine receptor subunit alpha-9 (484 aa).

The first 27 residues, 1–27 (MKRNNLSSFYVSLWLLFTATMLQAVES), serve as a signal peptide directing secretion. At 28-240 (AKGKYAQMLF…FTLILKRKSS (213 aa)) the chain is on the extracellular side. The N-linked (GlcNAc...) asparagine glycan is linked to Asn59. The cysteines at positions 157 and 171 are disulfide-linked. N-linked (GlcNAc...) asparagine glycosylation is present at Asn172. Positions 193 and 195 each coordinate Na(+). Cysteines 221 and 222 form a disulfide. Transmembrane regions (helical) follow at residues 241–261 (FYIF…PLGF), 271–291 (VSLG…VAEI), and 305–325 (YIAT…IMNV). At 326 to 462 (HHCGSEAKPV…WKKVAKVMDR (137 aa)) the chain is on the cytoplasmic side. The interval 364–395 (RREKEQEHRLEGGDMCRGGDGKSHLSSRNDDS) is disordered. A helical membrane pass occupies residues 463–483 (FFMWIFFIMVFFMSVLIIGKA).

The protein belongs to the ligand-gated ion channel (TC 1.A.9) family. Acetylcholine receptor (TC 1.A.9.1) subfamily. Alpha-9/CHRNA9 sub-subfamily. As to quaternary structure, forms homo- or heteropentameric channels in conjunction with CHRNA10. The native outer hair cell receptor is composed of CHRNA9:CHRNA10 heterooligomers. Found in the stoichiometric form (CHRNA9)2:(CHRNA10)3. Expressed in hair cells of the cochlea (at protein level). Expressed in hair cells of the cochlea.

It is found in the synaptic cell membrane. Its subcellular location is the cell membrane. It catalyses the reaction Ca(2+)(in) = Ca(2+)(out). It carries out the reaction K(+)(in) = K(+)(out). The catalysed reaction is Na(+)(in) = Na(+)(out). The enzyme catalyses Mg(2+)(in) = Mg(2+)(out). Its activity is regulated as follows. Activated by a myriad of ligands such as acetylcholine. AChR activity is inhibited by the antagonist alpha-conotoxins RgIA and GeXXA, small disulfide-constrained peptides from cone snails. Functionally, component of neuronal acetylcholine receptors (nAChRs) that function as pentameric, ligand-gated cation channels with high calcium permeability among other activities. nAChRs are excitatory neurotrasnmitter receptors formed by a collection of nAChR subunits known to mediate synaptic transmission in the nervous system and the neuromuscular junction. Each nAchR subunit confers differential attributes to channel properties, including activation, deactivation and desensitization kinetics, pH sensitivity, cation permeability, and binding to allosteric modulators. Forms either homopentamers or heteropentamers with CHRNA10. Expressed in the inner ear, in sympathetic neurons and in other non-neuronal cells, such as skin keratinocytes and lymphocytes. The channel is permeable to a range of divalent cations including calcium, the influx of which may activate a potassium current which hyperpolarizes the cell membrane. This Gallus gallus (Chicken) protein is Neuronal acetylcholine receptor subunit alpha-9 (CHRNA9).